The chain runs to 220 residues: Ribonuclease HII (220 aa).

In terms of domain architecture, RNase H type-2 spans 32–220 (KHIVGIDEAG…FAPIKGRYSV (189 aa)). A divalent metal cation-binding residues include D38, E39, and D130.

This sequence belongs to the RNase HII family. Requires Mn(2+) as cofactor. The cofactor is Mg(2+).

It is found in the cytoplasm. It catalyses the reaction Endonucleolytic cleavage to 5'-phosphomonoester.. Endonuclease that specifically degrades the RNA of RNA-DNA hybrids. The sequence is that of Ribonuclease HII from Brucella anthropi (strain ATCC 49188 / DSM 6882 / CCUG 24695 / JCM 21032 / LMG 3331 / NBRC 15819 / NCTC 12168 / Alc 37) (Ochrobactrum anthropi).